The sequence spans 483 residues: PAT complex subunit CCDC47 (483 aa).

A signal peptide spans methionine 1–alanine 20. Residues lysine 21–serine 135 lie on the Cytoplasmic side of the membrane. Residues aspartate 44 to aspartate 118 are disordered. Positions threonine 60–glycine 104 are enriched in acidic residues. The span at tyrosine 105–aspartate 118 shows a compositional bias: basic and acidic residues. Residues tyrosine 136–glycine 156 traverse the membrane as a helical segment. The Lumenal portion of the chain corresponds to lysine 157 to methionine 483. Residue asparagine 178 is glycosylated (N-linked (GlcNAc...) asparagine). The tract at residues glutamine 424–methionine 483 is disordered. Positions glutamine 430–glutamine 472 are enriched in basic and acidic residues. The stretch at proline 450 to methionine 483 forms a coiled coil. Residues methionine 473–methionine 483 show a composition bias toward basic residues.

This sequence belongs to the CCDC47 family. As to quaternary structure, component of the PAT complex, composed of WDR83OS/Asterix and CCDC47. The PAT complex is part of the multi-pass translocon (MPT) complex, composed of three subcomplexes, the GEL complex (composed of RAB5IF/OPTI and TMCO1), the BOS complex (composed of NCLN/Nicalin, NOMO1 and TMEM147) and the PAT complex (composed of WDR83OS/Asterix and CCDC47). The MPT complex associates with the SEC61 complex. Interacts with VCP, HSPA5, DERL1, DERL2 and SELENOS.

It is found in the endoplasmic reticulum membrane. Its subcellular location is the rough endoplasmic reticulum membrane. In terms of biological role, component of the multi-pass translocon (MPT) complex that mediates insertion of multi-pass membrane proteins into the lipid bilayer of membranes. The MPT complex takes over after the SEC61 complex: following membrane insertion of the first few transmembrane segments of proteins by the SEC61 complex, the MPT complex occludes the lateral gate of the SEC61 complex to promote insertion of subsequent transmembrane regions. Within the MPT complex, the PAT subcomplex sequesters any highly polar regions in the transmembrane domains away from the non-polar membrane environment until they can be buried in the interior of the fully assembled protein. Within the PAT subcomplex, CCDC47 occludes the lateral gate of the SEC61 complex. Involved in the regulation of calcium ion homeostasis in the ER. Required for proper protein degradation via the ERAD (ER-associated degradation) pathway. Has an essential role in the maintenance of ER organization during embryogenesis. The protein is PAT complex subunit CCDC47 (CCDC47) of Bos taurus (Bovine).